The sequence spans 106 residues: UPF0145 protein VV2_1464 (106 aa).

The protein belongs to the UPF0145 family.

The polypeptide is UPF0145 protein VV2_1464 (Vibrio vulnificus (strain CMCP6)).